The following is a 206-amino-acid chain: Dephospho-CoA kinase (206 aa).

Residues 6 to 206 enclose the DPCK domain; it reads IIGLTGGIAS…KWKWKDWSKK (201 aa). 14-19 contacts ATP; the sequence is ASGKST.

It belongs to the CoaE family.

It is found in the cytoplasm. The enzyme catalyses 3'-dephospho-CoA + ATP = ADP + CoA + H(+). It functions in the pathway cofactor biosynthesis; coenzyme A biosynthesis; CoA from (R)-pantothenate: step 5/5. Its function is as follows. Catalyzes the phosphorylation of the 3'-hydroxyl group of dephosphocoenzyme A to form coenzyme A. This is Dephospho-CoA kinase from Carboxydothermus hydrogenoformans (strain ATCC BAA-161 / DSM 6008 / Z-2901).